The primary structure comprises 241 residues: Small ribosomal subunit protein uS3 (241 aa).

The 69-residue stretch at 39–107 (MRKFVMDELK…ETHLNIVEVR (69 aa)) folds into the KH type-2 domain. Positions 214 to 241 (ASERRALEGDAQGPASRDRDRDRRRDNA) are disordered. A compositionally biased stretch (basic and acidic residues) spans 229-241 (SRDRDRDRRRDNA).

Belongs to the universal ribosomal protein uS3 family. Part of the 30S ribosomal subunit. Forms a tight complex with proteins S10 and S14.

In terms of biological role, binds the lower part of the 30S subunit head. Binds mRNA in the 70S ribosome, positioning it for translation. The protein is Small ribosomal subunit protein uS3 of Rhizobium rhizogenes (strain K84 / ATCC BAA-868) (Agrobacterium radiobacter).